The chain runs to 139 residues: Ribosome-binding factor A (139 aa).

Residues 120–139 (PENLLAVEDNTDEDDESFSE) are disordered. Over residues 128–139 (DNTDEDDESFSE) the composition is skewed to acidic residues.

Belongs to the RbfA family. In terms of assembly, monomer. Binds 30S ribosomal subunits, but not 50S ribosomal subunits or 70S ribosomes.

The protein localises to the cytoplasm. Functionally, one of several proteins that assist in the late maturation steps of the functional core of the 30S ribosomal subunit. Associates with free 30S ribosomal subunits (but not with 30S subunits that are part of 70S ribosomes or polysomes). Required for efficient processing of 16S rRNA. May interact with the 5'-terminal helix region of 16S rRNA. In Nostoc punctiforme (strain ATCC 29133 / PCC 73102), this protein is Ribosome-binding factor A.